A 64-amino-acid polypeptide reads, in one-letter code: Small ribosomal subunit protein bS21 (64 aa).

The interval Asp-26–Thr-64 is disordered. Residues Thr-43–Thr-64 are compositionally biased toward basic residues.

It belongs to the bacterial ribosomal protein bS21 family.

The protein is Small ribosomal subunit protein bS21 of Dehalococcoides mccartyi (strain ATCC BAA-2100 / JCM 16839 / KCTC 5957 / BAV1).